Consider the following 547-residue polypeptide: uncharacterized protein (547 aa).

Positions 1-37 (MSAASSAIPKRSDPRLLDQKKSAKSTLPKNTPENGVS) are disordered. Positions 10–21 (KRSDPRLLDQKK) are enriched in basic and acidic residues. The span at 24 to 37 (KSTLPKNTPENGVS) shows a compositional bias: polar residues. C3H1-type zinc fingers lie at residues 41-67 (NLQH…SHSL) and 68-95 (ETER…HALP). The disordered stretch occupies residues 132–176 (SPSLSSKTMKNPADKANNTTATDVRGNTATSPYFPFSRSPGRHSG). The segment covering 147 to 162 (ANNTTATDVRGNTATS) has biased composition (polar residues). S343 is subject to Phosphoserine. Y344 carries the post-translational modification Phosphotyrosine. Phosphoserine is present on residues S353, S355, S483, S489, S495, and S499. T502 is subject to Phosphothreonine. Residues 526–536 (VANSSPPWNST) show a composition bias toward polar residues. The segment at 526 to 547 (VANSSPPWNSTVEEETPFQMDD) is disordered. The span at 537–547 (VEEETPFQMDD) shows a compositional bias: acidic residues.

This is an uncharacterized protein from Schizosaccharomyces pombe (strain 972 / ATCC 24843) (Fission yeast).